The primary structure comprises 448 residues: Adenylosuccinate synthetase (448 aa).

GTP contacts are provided by residues 36–42 (GDEGKGK) and 64–66 (GHT). Asp-37 (proton acceptor) is an active-site residue. Positions 37 and 64 each coordinate Mg(2+). Residues 37-40 (DEGK), 62-65 (NAGH), Thr-154, Arg-168, Asn-246, Thr-261, and Arg-325 each bind IMP. His-65 functions as the Proton donor in the catalytic mechanism. 321–327 (VTTKRKR) provides a ligand contact to substrate. Residues Arg-327, 353–355 (KLD), and 436–438 (GVG) contribute to the GTP site.

Belongs to the adenylosuccinate synthetase family. As to quaternary structure, homodimer. Mg(2+) is required as a cofactor.

It is found in the cytoplasm. It catalyses the reaction IMP + L-aspartate + GTP = N(6)-(1,2-dicarboxyethyl)-AMP + GDP + phosphate + 2 H(+). It functions in the pathway purine metabolism; AMP biosynthesis via de novo pathway; AMP from IMP: step 1/2. In terms of biological role, plays an important role in the de novo pathway and in the salvage pathway of purine nucleotide biosynthesis. Catalyzes the first committed step in the biosynthesis of AMP from IMP. In Drosophila mojavensis (Fruit fly), this protein is Adenylosuccinate synthetase.